We begin with the raw amino-acid sequence, 423 residues long: UPF0229 protein Pfl01_5140 (423 aa).

The segment at 83 to 108 (TAGEHIARPPGGGGGRGPGKAGNSGE) is disordered. Gly residues predominate over residues 92–107 (PGGGGGRGPGKAGNSG).

The protein belongs to the UPF0229 family.

The protein is UPF0229 protein Pfl01_5140 of Pseudomonas fluorescens (strain Pf0-1).